Consider the following 137-residue polypeptide: Large ribosomal subunit protein uL16 (137 aa).

This sequence belongs to the universal ribosomal protein uL16 family. As to quaternary structure, part of the 50S ribosomal subunit.

Its function is as follows. Binds 23S rRNA and is also seen to make contacts with the A and possibly P site tRNAs. The polypeptide is Large ribosomal subunit protein uL16 (Streptococcus suis (strain 98HAH33)).